The sequence spans 447 residues: N-succinylarginine dihydrolase (447 aa).

Substrate is bound by residues A19–S28, N110, and H137–R138. Residue E174 is part of the active site. R212 is a substrate binding site. The active site involves H248. Residues D250 and N359 each contribute to the substrate site. The Nucleophile role is filled by C365.

Belongs to the succinylarginine dihydrolase family. As to quaternary structure, homodimer.

The enzyme catalyses N(2)-succinyl-L-arginine + 2 H2O + 2 H(+) = N(2)-succinyl-L-ornithine + 2 NH4(+) + CO2. The protein operates within amino-acid degradation; L-arginine degradation via AST pathway; L-glutamate and succinate from L-arginine: step 2/5. Catalyzes the hydrolysis of N(2)-succinylarginine into N(2)-succinylornithine, ammonia and CO(2). This is N-succinylarginine dihydrolase from Salmonella gallinarum (strain 287/91 / NCTC 13346).